The chain runs to 260 residues: 14-3-3 protein 3 (260 aa).

This sequence belongs to the 14-3-3 family. As to quaternary structure, homodimer.

This Solanum lycopersicum (Tomato) protein is 14-3-3 protein 3 (TFT3).